Reading from the N-terminus, the 506-residue chain is MPTIRPDEISTIIKQQIEQYNQEMQVSNVGTVLQVGDGIARIYGLDKVMASELLEFEDGTTGIALNLEEDNIGAVLIGSGRNIQEGSTVKSTGKIASIPVGEALLGRVVDPLCNPLDGKGPIQCTESRLIESPAPGIVDRRSVYEPLQTGITAIDALIPIGRGQRELIIGDRQTGKTTVAVDTILNQKGQDVICIYVAIGQKQSTIAQVVGILTERGAMDYSIVVAAGADSPAPLQWLAPYCGATIAEYFMYQGKHTLVVYDDLSKQAVAYRQMSLLLRRPPGREAYPGDVFYLHSRLLERAAKLSSQLGEGSMTALPIVETQANDVSAYIPTNVISITDGQIFLESDLFNAGIRPAINVGISVSRVGSAAQTKAMKKVAGSIKVELAQYRDLEAFAQFASDLDEATQKQLARGQRLQELLKQPQYSPLSLDQQVAIIYAGTRGYLDDIPVEKVSSFKQGLLAYLGTTHPKYGEIVLSTKQLTDEAEEILKTAITEFKQSFVAKAA.

Residue 170 to 177 (GDRQTGKT) coordinates ATP.

Belongs to the ATPase alpha/beta chains family. F-type ATPases have 2 components, CF(1) - the catalytic core - and CF(0) - the membrane proton channel. CF(1) has five subunits: alpha(3), beta(3), gamma(1), delta(1), epsilon(1). CF(0) has four main subunits: a(1), b(1), b'(1) and c(9-12).

Its subcellular location is the cellular thylakoid membrane. The catalysed reaction is ATP + H2O + 4 H(+)(in) = ADP + phosphate + 5 H(+)(out). Produces ATP from ADP in the presence of a proton gradient across the membrane. The alpha chain is a regulatory subunit. The protein is ATP synthase subunit alpha of Synechococcus sp. (strain JA-2-3B'a(2-13)) (Cyanobacteria bacterium Yellowstone B-Prime).